We begin with the raw amino-acid sequence, 117 residues long: Immunoglobulin lambda variable 10-54 (117 aa).

A signal peptide spans 1 to 21; it reads MPWALLLLTLLTHSAVSVVQA. A framework-1 region spans residues 20-43; sequence QAGLTQPPSVSKGLRQTATLTCTG. Residues 22-117 form the Ig-like domain; the sequence is GLTQPPSVSK…CSALDSSLSA (96 aa). Cys41 and Cys108 are joined by a disulfide. The segment at 44 to 52 is complementarity-determining-1; the sequence is NSNIVGNQG. A framework-2 region spans residues 53–69; that stretch reads AAWLQQHQGHPPKLLSY. A complementarity-determining-2 region spans residues 70 to 72; it reads RNN. Positions 73–108 are framework-3; that stretch reads NRPSGISERFSASRSGNTASLTITGLQPEDEADYYC. The interval 109-117 is complementarity-determining-3; sequence SALDSSLSA.

In terms of assembly, immunoglobulins are composed of two identical heavy chains and two identical light chains; disulfide-linked.

It localises to the secreted. The protein resides in the cell membrane. Its function is as follows. V region of the variable domain of immunoglobulin light chains that participates in the antigen recognition. Immunoglobulins, also known as antibodies, are membrane-bound or secreted glycoproteins produced by B lymphocytes. In the recognition phase of humoral immunity, the membrane-bound immunoglobulins serve as receptors which, upon binding of a specific antigen, trigger the clonal expansion and differentiation of B lymphocytes into immunoglobulins-secreting plasma cells. Secreted immunoglobulins mediate the effector phase of humoral immunity, which results in the elimination of bound antigens. The antigen binding site is formed by the variable domain of one heavy chain, together with that of its associated light chain. Thus, each immunoglobulin has two antigen binding sites with remarkable affinity for a particular antigen. The variable domains are assembled by a process called V-(D)-J rearrangement and can then be subjected to somatic hypermutations which, after exposure to antigen and selection, allow affinity maturation for a particular antigen. The protein is Immunoglobulin lambda variable 10-54 of Homo sapiens (Human).